Reading from the N-terminus, the 101-residue chain is Gamma-secretase subunit PEN-2 (101 aa).

Topologically, residues 1–17 (MNLERVSNEEKLNLCRK) are cytoplasmic. Positions 18 to 36 (YYLGGFAFLPFLWLVNIFW) form an intramembrane region, helical. Topologically, residues 37–57 (FFREAFLVPAYTEQSQIKGYV) are cytoplasmic. The helical transmembrane segment at 58 to 78 (WRSAVGFLFWVIVLTSWITIF) threads the bilayer. Residues 79–101 (QIYRPRWGALGDYLSFTIPLGTP) are Lumenal-facing.

It belongs to the PEN-2 family. In terms of assembly, the functional gamma-secretase complex is composed of at least four polypeptides: a presenilin homodimer (PSEN1 or PSEN2), nicastrin (NCSTN), APH1 (APH1A or APH1B) and PSENEN. In terms of tissue distribution, widely expressed. Expressed in leukocytes, lung, placenta, small intestine, liver, kidney, spleen thymus, skeletal muscle, heart and brain.

The protein resides in the endoplasmic reticulum membrane. Its subcellular location is the golgi apparatus. The protein localises to the golgi stack membrane. It is found in the cell membrane. It localises to the membrane. Essential subunit of the gamma-secretase complex, an endoprotease complex that catalyzes the intramembrane cleavage of integral membrane proteins such as Notch receptors and APP (amyloid-beta precursor protein). The gamma-secretase complex plays a role in Notch and Wnt signaling cascades and regulation of downstream processes via its role in processing key regulatory proteins, and by regulating cytosolic CTNNB1 levels. PSENEN modulates both endoproteolysis of presenilin and gamma-secretase activity. This is Gamma-secretase subunit PEN-2 (PSENEN) from Homo sapiens (Human).